The primary structure comprises 299 residues: Protease HtpX homolog (299 aa).

2 helical membrane passes run 15-35 (MFLTMFLLAALYLFFLAVLWQ) and 37-57 (GVSYTGIIVFVAIMLGVQYYF). Histidine 140 lines the Zn(2+) pocket. The active site involves glutamate 141. Residue histidine 144 participates in Zn(2+) binding. A run of 2 helical transmembrane segments spans residues 158-178 (FFATVASFIVQNFFYWGGAFG) and 187-207 (NNIMLVYLASLVVWLVSYFLI). Residue glutamate 215 coordinates Zn(2+).

This sequence belongs to the peptidase M48B family. Requires Zn(2+) as cofactor.

The protein localises to the cell membrane. The chain is Protease HtpX homolog from Moorella thermoacetica (strain ATCC 39073 / JCM 9320).